The primary structure comprises 667 residues: Fatty acyl-CoA synthetase A (667 aa).

This sequence belongs to the ATP-dependent AMP-binding enzyme family.

The protein resides in the endosome membrane. It catalyses the reaction a long-chain fatty acid + ATP + CoA = a long-chain fatty acyl-CoA + AMP + diphosphate. Its function is as follows. Long chain fatty acid acyl-CoA synthetases catalyze the formation of a thiester bond between a free fatty acid and coenzyme A during fatty acid metabolic process. May mediate fatty acid retrieval from the lumen of endosomes into the cytoplasm. The sequence is that of Fatty acyl-CoA synthetase A (fcsA) from Dictyostelium discoideum (Social amoeba).